Consider the following 51-residue polypeptide: ATP synthase F(1) complex subunit epsilon, mitochondrial (51 aa).

N6-acetyllysine; alternate occurs at positions 21, 32, and 37. Residues K21, K32, and K37 each carry the N6-succinyllysine; alternate modification. K44 carries the N6-acetyllysine modification.

This sequence belongs to the eukaryotic ATPase epsilon family. As to quaternary structure, component of the ATP synthase complex composed at least of ATP5F1A/subunit alpha, ATP5F1B/subunit beta, ATP5MC1/subunit c (homooctomer), MT-ATP6/subunit a, MT-ATP8/subunit 8, ATP5ME/subunit e, ATP5MF/subunit f, ATP5MG/subunit g, ATP5MK/subunit k, ATP5MJ/subunit j, ATP5F1C/subunit gamma, ATP5F1D/subunit delta, ATP5F1E/subunit epsilon, ATP5PF/subunit F6, ATP5PB/subunit b, ATP5PD/subunit d, ATP5PO/subunit OSCP. ATP synthase complex consists of a soluble F(1) head domain (subunits alpha(3) and beta(3)) - the catalytic core - and a membrane F(0) domain - the membrane proton channel (subunits c, a, 8, e, f, g, k and j). These two domains are linked by a central stalk (subunits gamma, delta, and epsilon) rotating inside the F1 region and a stationary peripheral stalk (subunits F6, b, d, and OSCP). In terms of tissue distribution, ubiquitous.

It localises to the mitochondrion. Its subcellular location is the mitochondrion inner membrane. Subunit epsilon, of the mitochondrial membrane ATP synthase complex (F(1)F(0) ATP synthase or Complex V) that produces ATP from ADP in the presence of a proton gradient across the membrane which is generated by electron transport complexes of the respiratory chain. ATP synthase complex consist of a soluble F(1) head domain - the catalytic core - and a membrane F(1) domain - the membrane proton channel. These two domains are linked by a central stalk rotating inside the F(1) region and a stationary peripheral stalk. During catalysis, ATP synthesis in the catalytic domain of F(1) is coupled via a rotary mechanism of the central stalk subunits to proton translocation. In vivo, can only synthesize ATP although its ATP hydrolase activity can be activated artificially in vitro. May be essential for the assembly of F(1) and may play an important role in the incorporation of the hydrophobic subunit c into the F(1)-c oligomer rotor of the mitochondrial ATP synthase complex. This is ATP synthase F(1) complex subunit epsilon, mitochondrial from Homo sapiens (Human).